Consider the following 226-residue polypeptide: Uridylate kinase (226 aa).

Residue 6–10 (KISGK) coordinates ATP. Glycine 43 contributes to the UMP binding site. ATP is bound by residues glycine 44 and arginine 48. UMP contacts are provided by residues aspartate 65 and 113–119 (FQPGQST). ATP-binding residues include threonine 139, asparagine 140, tyrosine 145, and aspartate 148.

The protein belongs to the UMP kinase family. In terms of assembly, homohexamer.

The protein localises to the cytoplasm. The catalysed reaction is UMP + ATP = UDP + ADP. It participates in pyrimidine metabolism; CTP biosynthesis via de novo pathway; UDP from UMP (UMPK route): step 1/1. Its activity is regulated as follows. Inhibited by UTP. Catalyzes the reversible phosphorylation of UMP to UDP. The protein is Uridylate kinase of Sulfurisphaera tokodaii (strain DSM 16993 / JCM 10545 / NBRC 100140 / 7) (Sulfolobus tokodaii).